The chain runs to 1215 residues: MVDVNRFKSMQITLASPSKVRSWSYGEVKKPETINYRTLKPERDGLFDEVIFGPTKDWECSCGKYKRIRYKGITCDRCGVEVTRAKVRRERMGHIELKAPISHIWYFKGIPSRMGLTLDMSPRALEEVIYFAAYVVIDPKDTPLEHKSIMTEREYRERLREYGYGSFVAKMGAEAIQDLLKQVDLPKEIAALKEELKTASGQKRIKAVRRLDVLDAFYKSGNKPEWMILNILPVIPPDLRPMVQLDGGRFAASDLNELYRRVINRNNRLARLLELNAPGIIVQNEKRMLQEAVDALIDNGRRGRPITGPGSRPLKSLSHMLKGKQGRFRQNLLGKRVDFSGRSVIAVGPTLKMYQCGVPREMAIELFKPFVMREIVARDIAGNVKAAKRLIERGDDRIWDILEEVIKEHPVLLNRAPTLHRLGIQAFEPVLIDGKALRLHPLVCEAYNADFDGDQMAIHVPLSEEAQAEARILMLAAEHILNPKDGKPVVTPSQDMVLGNYYLTMEDAGREGEGMVFKDADEAVMAYRNGYVHLHTRVGIATDSLDKPWKDNQKHKVMMTTVGKILFNAIMPEGLPYLQEPNNANLTEGTPDKYFLEPGSDIKAAIAELPINPPFKKKNLGNIIAEIFKRFRTTETSALLDRLKDLGYYHSTLAGLTVGIADIPVIDNKAEIIEESHERVEQIKKQFRRGMITDDERYAAVTDEWRSAKEKLEKRLVEKQDPKNPIVMMMDSGARGNISNFSQLAGMRGLMSAPNGRIMELPILSNFREGLSVLEMFFSTHGARKGMTDTALKTADSGYLTRRLVDVAQDVIIREDDCGTDRGLDIRSITDGKEMIEPLEERLQGRYTKKTVKHPETGAVIIGPNQLITEDIAREIVNAGVEQVTIRSVFTCNTRHGVCRHCYGINLATGDAVEVGEAVGTIAAQSIGEPGTQLTMRTFHTGGVASNSDITQGLPRVQEIFEARNPKGEAVITEVKGEVIAIEEDASTRTKKVFVKGKTGEGEYVVPFTARMKVEVGDQVARGAALTEGSIQPKRLLEVRDVLAVETYLLSEVQKVYRSQGVEIGDKHIEVMVRQMLRKVRVMDPGDTDLLMGTLMDITDFTDANAEVVIAGGIPATARPVLMGITKASLETNSFLSAASFQETTRVLTDAAIRGKRDNLLGLKENVIIGKIIPAGTGMARYRNLEPQAINEVEIIEDTVAEELAAEAELEAVTE.

The Zn(2+) site is built by cysteine 60, cysteine 62, cysteine 75, and cysteine 78. 3 residues coordinate Mg(2+): aspartate 450, aspartate 452, and aspartate 454. Residues cysteine 818, cysteine 892, cysteine 899, and cysteine 902 each contribute to the Zn(2+) site.

Belongs to the RNA polymerase beta' chain family. As to quaternary structure, the RNAP catalytic core consists of 2 alpha, 1 beta, 1 beta' and 1 omega subunit. When a sigma factor is associated with the core the holoenzyme is formed, which can initiate transcription. The cofactor is Mg(2+). Zn(2+) serves as cofactor.

It catalyses the reaction RNA(n) + a ribonucleoside 5'-triphosphate = RNA(n+1) + diphosphate. DNA-dependent RNA polymerase catalyzes the transcription of DNA into RNA using the four ribonucleoside triphosphates as substrates. This is DNA-directed RNA polymerase subunit beta' from Streptococcus suis (strain 98HAH33).